The following is a 187-amino-acid chain: NADH-quinone oxidoreductase subunit B (187 aa).

Positions 55, 56, 121, and 150 each coordinate [4Fe-4S] cluster.

Belongs to the complex I 20 kDa subunit family. As to quaternary structure, NDH-1 is composed of 14 different subunits. Subunits NuoB, C, D, E, F, and G constitute the peripheral sector of the complex. Requires [4Fe-4S] cluster as cofactor.

The protein localises to the cell inner membrane. The enzyme catalyses a quinone + NADH + 5 H(+)(in) = a quinol + NAD(+) + 4 H(+)(out). In terms of biological role, NDH-1 shuttles electrons from NADH, via FMN and iron-sulfur (Fe-S) centers, to quinones in the respiratory chain. The immediate electron acceptor for the enzyme in this species is believed to be ubiquinone. Couples the redox reaction to proton translocation (for every two electrons transferred, four hydrogen ions are translocated across the cytoplasmic membrane), and thus conserves the redox energy in a proton gradient. The protein is NADH-quinone oxidoreductase subunit B of Bdellovibrio bacteriovorus (strain ATCC 15356 / DSM 50701 / NCIMB 9529 / HD100).